The chain runs to 150 residues: Ribonuclease K6 (150 aa).

The N-terminal stretch at 1–23 (MVLCFPLLLLLLVLWGPVCPLHA) is a signal peptide. The active-site Proton acceptor is the histidine 38. 4 cysteine pairs are disulfide-bonded: cysteine 46–cysteine 104, cysteine 60–cysteine 114, cysteine 78–cysteine 129, and cysteine 85–cysteine 92. Residue asparagine 55 is glycosylated (N-linked (GlcNAc...) asparagine). Substrate is bound by residues 61-65 (KHQNT) and lysine 86. N-linked (GlcNAc...) asparagine glycosylation occurs at asparagine 100. Arginine 105 is a binding site for substrate. Histidine 145 (proton donor) is an active-site residue.

The protein belongs to the pancreatic ribonuclease family. As to quaternary structure, interacts (via N-terminus) with bacterial lipopolysaccharide (LPS). In terms of tissue distribution, highly expressed in spleen (at protein level). Has little or no expression in healthy kidneys (at protein level). Detected in interstitial leukocytes in infected kidneys (at protein level). Expressed in ureter where it localizes to urothelial and submucosal leukocytes (at protein level). Strong expression in lung and thymus, and lower expression in heart, placenta, pancreas, liver, brain and skeletal muscle. Also expressed in monocytes and neutrophils.

Its subcellular location is the secreted. The protein resides in the lysosome. The protein localises to the cytoplasmic granule. Functionally, ribonuclease which shows a preference for the pyrimidines uridine and cytosine. Has potent antibacterial activity against a range of Gram-positive and Gram-negative bacteria, including P.aeruginosa, A.baumanii, M.luteus, S.aureus, E.faecalis, E.faecium, S.saprophyticus and E.coli. Causes loss of bacterial membrane integrity, and also promotes agglutination of Gram-negative bacteria. Probably contributes to urinary tract sterility. Bactericidal activity is independent of RNase activity. The sequence is that of Ribonuclease K6 (RNASE6) from Homo sapiens (Human).